Reading from the N-terminus, the 879-residue chain is Phosphoenolpyruvate carboxylase (879 aa).

Active-site residues include histidine 138 and lysine 546.

This sequence belongs to the PEPCase type 1 family. The cofactor is Mg(2+).

It catalyses the reaction oxaloacetate + phosphate = phosphoenolpyruvate + hydrogencarbonate. Functionally, forms oxaloacetate, a four-carbon dicarboxylic acid source for the tricarboxylic acid cycle. The sequence is that of Phosphoenolpyruvate carboxylase from Pectobacterium atrosepticum (strain SCRI 1043 / ATCC BAA-672) (Erwinia carotovora subsp. atroseptica).